A 462-amino-acid chain; its full sequence is Protein ultraspiracle homolog (462 aa).

Positions 1–113 are modulating; the sequence is MSSVAKKDKR…NHPLSGSKHL (113 aa). 2 NR C4-type zinc fingers span residues 114–134 and 150–174; these read CSIC…CEGC and CRED…YQKC. The segment at residues 114-179 is a DNA-binding region (nuclear receptor); sequence CSICGDRASG…RYQKCLACGM (66 aa). A hinge region spans residues 180-201; sequence KREAVQEERQRAARRTEDAHPS. The NR LBD domain occupies 204–453; the sequence is VQELSIERLL…SYIRDALCNH (250 aa).

Belongs to the nuclear hormone receptor family. NR2 subfamily. Heterodimer of USP and ECR. In terms of tissue distribution, abundant expression seen in males and ovaries.

It localises to the nucleus. In Bombyx mori (Silk moth), this protein is Protein ultraspiracle homolog (USP).